The sequence spans 429 residues: Endoglucanase type C (429 aa).

A signal peptide spans 1–18 (MKSLSLILSALAVQVAVA). Gln19 is subject to Pyrrolidone carboxylic acid. Intrachain disulfides connect Cys36–Cys42, Cys66–Cys88, Cys78–Cys84, Cys156–Cys383, Cys190–Cys213, Cys194–Cys212, Cys233–Cys252, Cys241–Cys246, and Cys257–Cys333. Residue Asn74 is glycosylated (N-linked (GlcNAc...) asparagine). The active-site Nucleophile is Glu215. The Proton donor role is filled by Glu220. N-linked (GlcNAc...) asparagine glycosylation is found at Asn265 and Asn318.

It belongs to the glycosyl hydrolase 7 (cellulase C) family.

The catalysed reaction is Endohydrolysis of (1-&gt;4)-beta-D-glucosidic linkages in cellulose, lichenin and cereal beta-D-glucans.. This is Endoglucanase type C from Fusarium oxysporum (Fusarium vascular wilt).